We begin with the raw amino-acid sequence, 367 residues long: tRNA-specific 2-thiouridylase MnmA (367 aa).

Residues 6–13 and Met32 each bind ATP; that span reads AMSGGVDS. Cys101 acts as the Nucleophile in catalysis. Residues Cys101 and Cys193 are joined by a disulfide bond. Gly125 serves as a coordination point for ATP. The interval 143–145 is interaction with tRNA; it reads KDQ. Cys193 functions as the Cysteine persulfide intermediate in the catalytic mechanism.

It belongs to the MnmA/TRMU family.

It localises to the cytoplasm. The catalysed reaction is S-sulfanyl-L-cysteinyl-[protein] + uridine(34) in tRNA + AH2 + ATP = 2-thiouridine(34) in tRNA + L-cysteinyl-[protein] + A + AMP + diphosphate + H(+). Functionally, catalyzes the 2-thiolation of uridine at the wobble position (U34) of tRNA, leading to the formation of s(2)U34. In Mycobacterium tuberculosis (strain CDC 1551 / Oshkosh), this protein is tRNA-specific 2-thiouridylase MnmA.